Reading from the N-terminus, the 103-residue chain is Large ribosomal subunit protein uL24 (103 aa).

Belongs to the universal ribosomal protein uL24 family. Part of the 50S ribosomal subunit.

One of two assembly initiator proteins, it binds directly to the 5'-end of the 23S rRNA, where it nucleates assembly of the 50S subunit. Functionally, one of the proteins that surrounds the polypeptide exit tunnel on the outside of the subunit. The protein is Large ribosomal subunit protein uL24 of Brucella abortus (strain S19).